The following is a 714-amino-acid chain: Fatty acid oxidation complex subunit alpha (714 aa).

The tract at residues 1–190 (MEMASAFTLN…KLGLVDDVVP (190 aa)) is enoyl-CoA hydratase. Positions 306–714 (APLNSVGILG…FWKTTATDLQ (409 aa)) are 3-hydroxyacyl-CoA dehydrogenase.

It in the N-terminal section; belongs to the enoyl-CoA hydratase/isomerase family. This sequence in the central section; belongs to the 3-hydroxyacyl-CoA dehydrogenase family. As to quaternary structure, heterotetramer of two alpha chains (FadJ) and two beta chains (FadI).

The protein resides in the cytoplasm. The catalysed reaction is a (3S)-3-hydroxyacyl-CoA = a (2E)-enoyl-CoA + H2O. The enzyme catalyses a 4-saturated-(3S)-3-hydroxyacyl-CoA = a (3E)-enoyl-CoA + H2O. It carries out the reaction a (3S)-3-hydroxyacyl-CoA + NAD(+) = a 3-oxoacyl-CoA + NADH + H(+). It catalyses the reaction (3S)-3-hydroxybutanoyl-CoA = (3R)-3-hydroxybutanoyl-CoA. It participates in lipid metabolism; fatty acid beta-oxidation. Catalyzes the formation of a hydroxyacyl-CoA by addition of water on enoyl-CoA. Also exhibits 3-hydroxyacyl-CoA epimerase and 3-hydroxyacyl-CoA dehydrogenase activities. This is Fatty acid oxidation complex subunit alpha from Escherichia coli O81 (strain ED1a).